Reading from the N-terminus, the 324-residue chain is Beta-ketoacyl-[acyl-carrier-protein] synthase III (324 aa).

Residues cysteine 116 and histidine 251 contribute to the active site. The ACP-binding stretch occupies residues 252-256; sequence QANLR. Asparagine 281 is an active-site residue.

It belongs to the thiolase-like superfamily. FabH family. In terms of assembly, homodimer.

The protein resides in the cytoplasm. The catalysed reaction is malonyl-[ACP] + acetyl-CoA + H(+) = 3-oxobutanoyl-[ACP] + CO2 + CoA. The protein operates within lipid metabolism; fatty acid biosynthesis. Catalyzes the condensation reaction of fatty acid synthesis by the addition to an acyl acceptor of two carbons from malonyl-ACP. Catalyzes the first condensation reaction which initiates fatty acid synthesis and may therefore play a role in governing the total rate of fatty acid production. Possesses both acetoacetyl-ACP synthase and acetyl transacylase activities. Its substrate specificity determines the biosynthesis of branched-chain and/or straight-chain of fatty acids. The sequence is that of Beta-ketoacyl-[acyl-carrier-protein] synthase III from Xylella fastidiosa (strain 9a5c).